We begin with the raw amino-acid sequence, 199 residues long: B3 domain-containing protein Os06g0107800 (199 aa).

A disordered region spans residues 13-32 (QLQGGGGGHGGGGGGGGGER). Residues 15 to 29 (QGGGGGHGGGGGGGG) show a composition bias toward gly residues. The TF-B3 DNA-binding region spans 37–141 (FEKVVTPSDV…RLFIDCRKRA (105 aa)).

The protein resides in the nucleus. The chain is B3 domain-containing protein Os06g0107800 from Oryza sativa subsp. japonica (Rice).